Reading from the N-terminus, the 166-residue chain is Peptidyl-prolyl cis-trans isomerase cyp18 (166 aa).

The region spanning 2–164 (STVELNTSAG…QPVVIESAKI (163 aa)) is the PPIase cyclophilin-type domain.

Belongs to the cyclophilin-type PPIase family. In terms of assembly, monomer.

Its subcellular location is the cytoplasm. The enzyme catalyses [protein]-peptidylproline (omega=180) = [protein]-peptidylproline (omega=0). With respect to regulation, inhibition by cyclosporin A with a Ki of 21 mu-mol. PPIases accelerate the folding of proteins. It catalyzes the cis-trans isomerization of proline imidic peptide bonds in oligopeptides. This chain is Peptidyl-prolyl cis-trans isomerase cyp18, found in Streptomyces antibioticus.